Here is a 74-residue protein sequence, read N- to C-terminus: MGTFSIWHWLIVLLVVVVVFGTKKLRNIGTDLGSAVKGFKDGMKDAATDTAPAGQVANQSTADQTIDVQTKPKG.

Residues 1 to 21 traverse the membrane as a helical segment; sequence MGTFSIWHWLIVLLVVVVVFG. The interval 50-74 is disordered; the sequence is TAPAGQVANQSTADQTIDVQTKPKG. Residues 56–68 show a composition bias toward polar residues; the sequence is VANQSTADQTIDV.

This sequence belongs to the TatA/E family. As to quaternary structure, the Tat system comprises two distinct complexes: a TatABC complex, containing multiple copies of TatA, TatB and TatC subunits, and a separate TatA complex, containing only TatA subunits. Substrates initially bind to the TatABC complex, which probably triggers association of the separate TatA complex to form the active translocon.

It is found in the cell inner membrane. Functionally, part of the twin-arginine translocation (Tat) system that transports large folded proteins containing a characteristic twin-arginine motif in their signal peptide across membranes. TatA could form the protein-conducting channel of the Tat system. The chain is Sec-independent protein translocase protein TatA from Verminephrobacter eiseniae (strain EF01-2).